Here is a 478-residue protein sequence, read N- to C-terminus: Phosphomannomutase (478 aa).

A helical membrane pass occupies residues 30–46 (FTPEVCARFTISFLTVM). Ser111 acts as the Phosphoserine intermediate in catalysis. Ser111, Asp245, Asp247, and Asp249 together coordinate Mg(2+). The helical transmembrane segment at 265 to 284 (ILGLLCSLELAADAVAIPVS) threads the bilayer.

Belongs to the phosphohexose mutase family. Mg(2+) is required as a cofactor.

It localises to the cell membrane. The enzyme catalyses alpha-D-mannose 1-phosphate = D-mannose 6-phosphate. It participates in nucleotide-sugar biosynthesis; GDP-alpha-D-mannose biosynthesis; alpha-D-mannose 1-phosphate from D-fructose 6-phosphate: step 2/2. The protein operates within bacterial outer membrane biogenesis; LPS O-antigen biosynthesis. Its function is as follows. Involved in GDP-mannose biosynthesis which serves as the activated sugar nucleotide precursor for mannose residues in cell surface polysaccharides. This enzyme participates in synthesis of the LPS group C2 O antigen. The protein is Phosphomannomutase (manB) of Salmonella muenchen.